We begin with the raw amino-acid sequence, 541 residues long: 5' exonuclease Apollo (541 aa).

Lysine 334 is covalently cross-linked (Glycyl lysine isopeptide (Lys-Gly) (interchain with G-Cter in SUMO2)). Disordered regions lie at residues 350–375 (TQGV…KKHK) and 450–489 (IGLG…TTHL). Residues 358-371 (PEEKADQVKVDRDS) show a composition bias toward basic and acidic residues. A TBM motif is present at residues 492–507 (ESGGLALKYLLTPVDF).

The protein belongs to the DNA repair metallo-beta-lactamase (DRMBL) family. Interacts with TERF2; the interaction is direct. Interacts with MUS81, MRE11 and FANCD2. Interacts with HSPA2, HSPA8 and HSPA14. Interacts with SPAG5. Ubiquitinated, leading to its degradation. Interaction with TERF2 protects it from ubiquitination.

Its subcellular location is the chromosome. The protein localises to the telomere. The protein resides in the nucleus. It is found in the cytoplasm. It localises to the cytoskeleton. Its subcellular location is the microtubule organizing center. The protein localises to the centrosome. It carries out the reaction a beta-lactam + H2O = a substituted beta-amino acid. Functionally, 5'-3' exonuclease that plays a central role in telomere maintenance and protection during S-phase. Participates in the protection of telomeres against non-homologous end-joining (NHEJ)-mediated repair, thereby ensuring that telomeres do not fuse. Plays a key role in telomeric loop (T loop) formation by being recruited by TERF2 at the leading end telomeres and by processing leading-end telomeres immediately after their replication via its exonuclease activity: generates 3' single-stranded overhang at the leading end telomeres avoiding blunt leading-end telomeres that are vulnerable to end-joining reactions and expose the telomere end in a manner that activates the DNA repair pathways. Together with TERF2, required to protect telomeres from replicative damage during replication by controlling the amount of DNA topoisomerase (TOP1, TOP2A and TOP2B) needed for telomere replication during fork passage and prevent aberrant telomere topology. Also involved in response to DNA damage: plays a role in response to DNA interstrand cross-links (ICLs) by facilitating double-strand break formation. In case of spindle stress, involved in prophase checkpoint. Possesses beta-lactamase activity, catalyzing the hydrolysis of penicillin G and nitrocefin. Exhibits no activity towards other beta-lactam antibiotic classes including cephalosporins (cefotaxime) and carbapenems (imipenem). This Rattus norvegicus (Rat) protein is 5' exonuclease Apollo (Dclre1b).